Here is a 652-residue protein sequence, read N- to C-terminus: DNA ligase (652 aa).

Residues 29 to 33 (DSEYD), 78 to 79 (SL), and E107 contribute to the NAD(+) site. K109 acts as the N6-AMP-lysine intermediate in catalysis. Residues R130, E164, K278, and K302 each coordinate NAD(+). C395, C398, C413, and C418 together coordinate Zn(2+). Residues 577-652 (VADAALSGLT…VRDEAWLESL (76 aa)) form the BRCT domain.

The protein belongs to the NAD-dependent DNA ligase family. LigA subfamily. Mg(2+) is required as a cofactor. Requires Mn(2+) as cofactor.

The catalysed reaction is NAD(+) + (deoxyribonucleotide)n-3'-hydroxyl + 5'-phospho-(deoxyribonucleotide)m = (deoxyribonucleotide)n+m + AMP + beta-nicotinamide D-nucleotide.. Functionally, DNA ligase that catalyzes the formation of phosphodiester linkages between 5'-phosphoryl and 3'-hydroxyl groups in double-stranded DNA using NAD as a coenzyme and as the energy source for the reaction. It is essential for DNA replication and repair of damaged DNA. This is DNA ligase from Streptococcus pneumoniae (strain JJA).